Reading from the N-terminus, the 29-residue chain is Cytochrome b6-f complex subunit 8 (29 aa).

Residues 3–23 (IVSLAWAGLMVVFTFSLSLVV) traverse the membrane as a helical segment.

It belongs to the PetN family. In terms of assembly, the 4 large subunits of the cytochrome b6-f complex are cytochrome b6, subunit IV (17 kDa polypeptide, PetD), cytochrome f and the Rieske protein, while the 4 small subunits are PetG, PetL, PetM and PetN. The complex functions as a dimer.

Its subcellular location is the plastid. The protein resides in the chloroplast thylakoid membrane. Its function is as follows. Component of the cytochrome b6-f complex, which mediates electron transfer between photosystem II (PSII) and photosystem I (PSI), cyclic electron flow around PSI, and state transitions. This is Cytochrome b6-f complex subunit 8 from Arabis hirsuta (Hairy rock-cress).